Here is a 304-residue protein sequence, read N- to C-terminus: MQNFGKVAVLMGGFSSEREISLDSGTAILNALKSKGIDAYAFDPKETPLSELKAQGFQTAFNILHGTYGEDGAVQGALELLGIPYTGSGVAASAIGMDKYRCKLIWQALGLPVPEFAVLHDDTDFDAVEEKLGLPMFVKPAAEGSSVGVVKVKGKGRLKSVYEELKHLQGEIIAERFIGGGEYSCPVLNGKGLPGIHIIPATEFYDYEAKYNRDDTIYQCPSEDLTEAEESLMRELAVRGAQAIGAEGCVRVDFLKDTDGKLYLLEINTLPGMTSHSLVPKSAAVTGVGFADLCIEILKTAHVG.

The region spanning lysine 103–lysine 299 is the ATP-grasp domain. Glutamate 129 to serine 184 contacts ATP. Residues aspartate 253, glutamate 266, and asparagine 268 each coordinate Mg(2+).

It belongs to the D-alanine--D-alanine ligase family. Requires Mg(2+) as cofactor. It depends on Mn(2+) as a cofactor.

The protein localises to the cytoplasm. The catalysed reaction is 2 D-alanine + ATP = D-alanyl-D-alanine + ADP + phosphate + H(+). It functions in the pathway cell wall biogenesis; peptidoglycan biosynthesis. In terms of biological role, cell wall formation. This Neisseria meningitidis serogroup B (strain ATCC BAA-335 / MC58) protein is D-alanine--D-alanine ligase.